A 272-amino-acid polypeptide reads, in one-letter code: Acyl-[acyl-carrier-protein]--UDP-N-acetylglucosamine O-acyltransferase (272 aa).

This sequence belongs to the transferase hexapeptide repeat family. LpxA subfamily. As to quaternary structure, homotrimer.

The protein localises to the cytoplasm. The catalysed reaction is a (3R)-hydroxyacyl-[ACP] + UDP-N-acetyl-alpha-D-glucosamine = a UDP-3-O-[(3R)-3-hydroxyacyl]-N-acetyl-alpha-D-glucosamine + holo-[ACP]. It participates in glycolipid biosynthesis; lipid IV(A) biosynthesis; lipid IV(A) from (3R)-3-hydroxytetradecanoyl-[acyl-carrier-protein] and UDP-N-acetyl-alpha-D-glucosamine: step 1/6. Involved in the biosynthesis of lipid A, a phosphorylated glycolipid that anchors the lipopolysaccharide to the outer membrane of the cell. The polypeptide is Acyl-[acyl-carrier-protein]--UDP-N-acetylglucosamine O-acyltransferase (Rhizobium johnstonii (strain DSM 114642 / LMG 32736 / 3841) (Rhizobium leguminosarum bv. viciae)).